The sequence spans 262 residues: Acyl-[acyl-carrier-protein]--UDP-N-acetylglucosamine O-acyltransferase (262 aa).

This sequence belongs to the transferase hexapeptide repeat family. LpxA subfamily. In terms of assembly, homotrimer.

The protein localises to the cytoplasm. The enzyme catalyses a (3R)-hydroxyacyl-[ACP] + UDP-N-acetyl-alpha-D-glucosamine = a UDP-3-O-[(3R)-3-hydroxyacyl]-N-acetyl-alpha-D-glucosamine + holo-[ACP]. The protein operates within glycolipid biosynthesis; lipid IV(A) biosynthesis; lipid IV(A) from (3R)-3-hydroxytetradecanoyl-[acyl-carrier-protein] and UDP-N-acetyl-alpha-D-glucosamine: step 1/6. In terms of biological role, involved in the biosynthesis of lipid A, a phosphorylated glycolipid that anchors the lipopolysaccharide to the outer membrane of the cell. In Erwinia tasmaniensis (strain DSM 17950 / CFBP 7177 / CIP 109463 / NCPPB 4357 / Et1/99), this protein is Acyl-[acyl-carrier-protein]--UDP-N-acetylglucosamine O-acyltransferase.